The sequence spans 287 residues: Elongation factor Ts (287 aa).

The segment at 80–83 (TDFL) is involved in Mg(2+) ion dislocation from EF-Tu.

This sequence belongs to the EF-Ts family.

Its subcellular location is the cytoplasm. Functionally, associates with the EF-Tu.GDP complex and induces the exchange of GDP to GTP. It remains bound to the aminoacyl-tRNA.EF-Tu.GTP complex up to the GTP hydrolysis stage on the ribosome. In Pseudomonas putida (strain GB-1), this protein is Elongation factor Ts.